We begin with the raw amino-acid sequence, 312 residues long: Polyamine aminopropyltransferase (312 aa).

Residues 7 to 247 enclose the PABS domain; sequence FFWAQEYFTP…GPLGFALAAQ (241 aa). Q36 is an S-methyl-5'-thioadenosine binding site. H67 and E95 together coordinate spermidine. Residues D115 and 147–148 each bind S-methyl-5'-thioadenosine; that span reads DA. Residue D165 is the Proton acceptor of the active site. P174 provides a ligand contact to S-methyl-5'-thioadenosine.

It belongs to the spermidine/spermine synthase family. In terms of assembly, homodimer or homotetramer.

It localises to the cytoplasm. The enzyme catalyses S-adenosyl 3-(methylsulfanyl)propylamine + putrescine = S-methyl-5'-thioadenosine + spermidine + H(+). The protein operates within amine and polyamine biosynthesis; spermidine biosynthesis; spermidine from putrescine: step 1/1. Its function is as follows. Catalyzes the irreversible transfer of a propylamine group from the amino donor S-adenosylmethioninamine (decarboxy-AdoMet) to putrescine (1,4-diaminobutane) to yield spermidine. The sequence is that of Polyamine aminopropyltransferase from Synechococcus sp. (strain JA-3-3Ab) (Cyanobacteria bacterium Yellowstone A-Prime).